The following is a 376-amino-acid chain: Putative phosphoserine aminotransferase (376 aa).

Arg50 is an L-glutamate binding site. Pyridoxal 5'-phosphate contacts are provided by residues Ala84–Thr85, Phe108, Thr154, Asp176, and Gln199. Residue Lys200 is modified to N6-(pyridoxal phosphate)lysine. A pyridoxal 5'-phosphate-binding site is contributed by Asn251 to Thr252.

The protein belongs to the class-V pyridoxal-phosphate-dependent aminotransferase family. SerC subfamily. In terms of assembly, homodimer. It depends on pyridoxal 5'-phosphate as a cofactor.

It localises to the cytoplasm. It carries out the reaction O-phospho-L-serine + 2-oxoglutarate = 3-phosphooxypyruvate + L-glutamate. The catalysed reaction is 4-(phosphooxy)-L-threonine + 2-oxoglutarate = (R)-3-hydroxy-2-oxo-4-phosphooxybutanoate + L-glutamate. It participates in amino-acid biosynthesis; L-serine biosynthesis; L-serine from 3-phospho-D-glycerate: step 2/3. Its pathway is cofactor biosynthesis; pyridoxine 5'-phosphate biosynthesis; pyridoxine 5'-phosphate from D-erythrose 4-phosphate: step 3/5. Catalyzes the reversible conversion of 3-phosphohydroxypyruvate to phosphoserine and of 3-hydroxy-2-oxo-4-phosphonooxybutanoate to phosphohydroxythreonine. This is Putative phosphoserine aminotransferase from Mycobacterium bovis (strain ATCC BAA-935 / AF2122/97).